Reading from the N-terminus, the 182-residue chain is Photosystem I assembly protein Ycf4 (182 aa).

A run of 2 helical transmembrane segments spans residues 22–42 (WSSV…SSYL) and 63–83 (VMCF…LTIF).

The protein belongs to the Ycf4 family.

It is found in the plastid. The protein resides in the chloroplast thylakoid membrane. Functionally, seems to be required for the assembly of the photosystem I complex. This Oltmannsiellopsis viridis (Marine flagellate) protein is Photosystem I assembly protein Ycf4.